Consider the following 96-residue polypeptide: Small ribosomal subunit protein bS16m (96 aa).

The protein belongs to the bacterial ribosomal protein bS16 family. Component of the mitochondrial small ribosomal subunit (mt-SSU). Mature yeast 74S mitochondrial ribosomes consist of a small (37S) and a large (54S) subunit. The 37S small subunit contains a 15S ribosomal RNA (15S mt-rRNA) and at least 32 different proteins. The 54S large subunit contains a 21S rRNA (21S mt-rRNA) and at least 45 different proteins.

It localises to the mitochondrion. In terms of biological role, component of the mitochondrial ribosome (mitoribosome), a dedicated translation machinery responsible for the synthesis of mitochondrial genome-encoded proteins, including at least some of the essential transmembrane subunits of the mitochondrial respiratory chain. The mitoribosomes are attached to the mitochondrial inner membrane and translation products are cotranslationally integrated into the membrane. The protein is Small ribosomal subunit protein bS16m (mrps16) of Schizosaccharomyces pombe (strain 972 / ATCC 24843) (Fission yeast).